We begin with the raw amino-acid sequence, 306 residues long: Glutaminase (306 aa).

Positions 64, 115, 159, 166, 190, 242, and 260 each coordinate substrate.

The protein belongs to the glutaminase family. As to quaternary structure, homotetramer.

The enzyme catalyses L-glutamine + H2O = L-glutamate + NH4(+). The sequence is that of Glutaminase from Aliivibrio salmonicida (strain LFI1238) (Vibrio salmonicida (strain LFI1238)).